Reading from the N-terminus, the 397-residue chain is Putative nickel insertion protein (397 aa).

The protein belongs to the LarC family.

This Synechococcus sp. (strain JA-2-3B'a(2-13)) (Cyanobacteria bacterium Yellowstone B-Prime) protein is Putative nickel insertion protein.